Reading from the N-terminus, the 284-residue chain is Elongation factor Ts (284 aa).

Residues 80 to 83 (TDFV) form an involved in Mg(2+) ion dislocation from EF-Tu region.

Belongs to the EF-Ts family.

The protein resides in the cytoplasm. In terms of biological role, associates with the EF-Tu.GDP complex and induces the exchange of GDP to GTP. It remains bound to the aminoacyl-tRNA.EF-Tu.GTP complex up to the GTP hydrolysis stage on the ribosome. The chain is Elongation factor Ts from Neisseria meningitidis serogroup C (strain 053442).